A 527-amino-acid polypeptide reads, in one-letter code: Peptide chain release factor 3 (527 aa).

The region spanning 9 to 277 is the tr-type G domain; that stretch reads AKRRTFAIIS…AVVDWAPKPL (269 aa). Residues 18–25, 86–90, and 140–143 contribute to the GTP site; these read SHPDAGKT, DTPGH, and NKLD.

Belongs to the TRAFAC class translation factor GTPase superfamily. Classic translation factor GTPase family. PrfC subfamily.

Its subcellular location is the cytoplasm. In terms of biological role, increases the formation of ribosomal termination complexes and stimulates activities of RF-1 and RF-2. It binds guanine nucleotides and has strong preference for UGA stop codons. It may interact directly with the ribosome. The stimulation of RF-1 and RF-2 is significantly reduced by GTP and GDP, but not by GMP. The protein is Peptide chain release factor 3 of Stutzerimonas stutzeri (strain A1501) (Pseudomonas stutzeri).